The following is a 173-amino-acid chain: Ribosome maturation factor RimP (173 aa).

This sequence belongs to the RimP family.

The protein resides in the cytoplasm. Functionally, required for maturation of 30S ribosomal subunits. The polypeptide is Ribosome maturation factor RimP (Chlorobaculum tepidum (strain ATCC 49652 / DSM 12025 / NBRC 103806 / TLS) (Chlorobium tepidum)).